The following is a 248-amino-acid chain: 3-deoxy-manno-octulosonate cytidylyltransferase (248 aa).

This sequence belongs to the KdsB family.

It is found in the cytoplasm. The enzyme catalyses 3-deoxy-alpha-D-manno-oct-2-ulosonate + CTP = CMP-3-deoxy-beta-D-manno-octulosonate + diphosphate. Its pathway is nucleotide-sugar biosynthesis; CMP-3-deoxy-D-manno-octulosonate biosynthesis; CMP-3-deoxy-D-manno-octulosonate from 3-deoxy-D-manno-octulosonate and CTP: step 1/1. The protein operates within bacterial outer membrane biogenesis; lipopolysaccharide biosynthesis. Activates KDO (a required 8-carbon sugar) for incorporation into bacterial lipopolysaccharide in Gram-negative bacteria. This chain is 3-deoxy-manno-octulosonate cytidylyltransferase, found in Alteromonas mediterranea (strain DSM 17117 / CIP 110805 / LMG 28347 / Deep ecotype).